Here is a 483-residue protein sequence, read N- to C-terminus: Glycogen synthase (483 aa).

Residue Lys-15 participates in ADP-alpha-D-glucose binding.

It belongs to the glycosyltransferase 1 family. Bacterial/plant glycogen synthase subfamily.

The catalysed reaction is [(1-&gt;4)-alpha-D-glucosyl](n) + ADP-alpha-D-glucose = [(1-&gt;4)-alpha-D-glucosyl](n+1) + ADP + H(+). It functions in the pathway glycan biosynthesis; glycogen biosynthesis. Synthesizes alpha-1,4-glucan chains using ADP-glucose. The polypeptide is Glycogen synthase (Petrotoga mobilis (strain DSM 10674 / SJ95)).